The primary structure comprises 695 residues: Elongation factor G (695 aa).

In terms of domain architecture, tr-type G spans 10–285 (AKTRNIGIMA…AVIDYLPSPI (276 aa)). GTP-binding positions include 19–26 (AHIDAGKT), 83–87 (DTPGH), and 137–140 (NKMD).

This sequence belongs to the TRAFAC class translation factor GTPase superfamily. Classic translation factor GTPase family. EF-G/EF-2 subfamily.

It is found in the cytoplasm. Catalyzes the GTP-dependent ribosomal translocation step during translation elongation. During this step, the ribosome changes from the pre-translocational (PRE) to the post-translocational (POST) state as the newly formed A-site-bound peptidyl-tRNA and P-site-bound deacylated tRNA move to the P and E sites, respectively. Catalyzes the coordinated movement of the two tRNA molecules, the mRNA and conformational changes in the ribosome. In Limosilactobacillus reuteri (strain DSM 20016) (Lactobacillus reuteri), this protein is Elongation factor G.